The chain runs to 276 residues: Mitochondrial outer membrane protein porin 2 (276 aa).

At serine 76 the chain carries Phosphoserine. Threonine 236 bears the Phosphothreonine mark.

It belongs to the eukaryotic mitochondrial porin (TC 1.B.8.1) family. In terms of tissue distribution, expressed in root tips, steles, leaves, sepals, petals, stamen and pistils.

The protein localises to the mitochondrion outer membrane. In terms of biological role, forms a channel through the mitochondrial outer membrane that allows diffusion of small hydrophilic molecules. The channel adopts an open conformation at low or zero membrane potential and a closed conformation at potentials above 30-40 mV. The open state has a weak anion selectivity whereas the closed state is cation-selective. Involved in plant growth and development at the vegetative and reproductive stages. Is important for leaf and pollen development and mitochondrial membrane potential steady state. May be involved in ABA-mediated early seedling development and disease resistance. The sequence is that of Mitochondrial outer membrane protein porin 2 (VDAC2) from Arabidopsis thaliana (Mouse-ear cress).